Consider the following 460-residue polypeptide: Proline--tRNA ligase (460 aa).

The protein belongs to the class-II aminoacyl-tRNA synthetase family. ProS type 3 subfamily. As to quaternary structure, homodimer.

The protein localises to the cytoplasm. The enzyme catalyses tRNA(Pro) + L-proline + ATP = L-prolyl-tRNA(Pro) + AMP + diphosphate. In terms of biological role, catalyzes the attachment of proline to tRNA(Pro) in a two-step reaction: proline is first activated by ATP to form Pro-AMP and then transferred to the acceptor end of tRNA(Pro). The polypeptide is Proline--tRNA ligase (Methanococcus maripaludis (strain DSM 14266 / JCM 13030 / NBRC 101832 / S2 / LL)).